The primary structure comprises 259 residues: Pimeloyl-[acyl-carrier protein] methyl ester esterase (259 aa).

Positions 15–242 (HLVLLHGWGL…AAHAPFISHP (228 aa)) constitute an AB hydrolase-1 domain. Substrate is bound by residues W22, 82–83 (SL), and 143–147 (FLALQ). The Nucleophile role is filled by S82. Residues D207 and H235 contribute to the active site. H235 contributes to the substrate binding site.

This sequence belongs to the AB hydrolase superfamily. Carboxylesterase BioH family. In terms of assembly, monomer.

The protein resides in the cytoplasm. It catalyses the reaction 6-carboxyhexanoyl-[ACP] methyl ester + H2O = 6-carboxyhexanoyl-[ACP] + methanol + H(+). It participates in cofactor biosynthesis; biotin biosynthesis. In terms of biological role, the physiological role of BioH is to remove the methyl group introduced by BioC when the pimeloyl moiety is complete. It allows to synthesize pimeloyl-ACP via the fatty acid synthetic pathway through the hydrolysis of the ester bonds of pimeloyl-ACP esters. This is Pimeloyl-[acyl-carrier protein] methyl ester esterase from Cronobacter sakazakii (strain ATCC BAA-894) (Enterobacter sakazakii).